The following is a 197-amino-acid chain: Protein GrpE (197 aa).

The disordered stretch occupies residues 1-39; the sequence is MSSKEQKTPEGQAPEEIIMDQHEEIEAVEPEASAEQVDP.

The protein belongs to the GrpE family. In terms of assembly, homodimer.

It localises to the cytoplasm. Functionally, participates actively in the response to hyperosmotic and heat shock by preventing the aggregation of stress-denatured proteins, in association with DnaK and GrpE. It is the nucleotide exchange factor for DnaK and may function as a thermosensor. Unfolded proteins bind initially to DnaJ; upon interaction with the DnaJ-bound protein, DnaK hydrolyzes its bound ATP, resulting in the formation of a stable complex. GrpE releases ADP from DnaK; ATP binding to DnaK triggers the release of the substrate protein, thus completing the reaction cycle. Several rounds of ATP-dependent interactions between DnaJ, DnaK and GrpE are required for fully efficient folding. This chain is Protein GrpE, found in Escherichia coli O45:K1 (strain S88 / ExPEC).